An 83-amino-acid chain; its full sequence is Small ribosomal subunit protein uS17 (83 aa).

It belongs to the universal ribosomal protein uS17 family. In terms of assembly, part of the 30S ribosomal subunit.

In terms of biological role, one of the primary rRNA binding proteins, it binds specifically to the 5'-end of 16S ribosomal RNA. This chain is Small ribosomal subunit protein uS17, found in Colwellia psychrerythraea (strain 34H / ATCC BAA-681) (Vibrio psychroerythus).